A 122-amino-acid chain; its full sequence is Large ribosomal subunit protein uL14 (122 aa).

The protein belongs to the universal ribosomal protein uL14 family. Part of the 50S ribosomal subunit. Forms a cluster with proteins L3 and L19. In the 70S ribosome, L14 and L19 interact and together make contacts with the 16S rRNA in bridges B5 and B8.

Its function is as follows. Binds to 23S rRNA. Forms part of two intersubunit bridges in the 70S ribosome. This chain is Large ribosomal subunit protein uL14, found in Chlorobaculum parvum (strain DSM 263 / NCIMB 8327) (Chlorobium vibrioforme subsp. thiosulfatophilum).